A 213-amino-acid polypeptide reads, in one-letter code: Large ribosomal subunit protein uL3 (213 aa).

Gln151 is subject to N5-methylglutamine.

The protein belongs to the universal ribosomal protein uL3 family. In terms of assembly, part of the 50S ribosomal subunit. Forms a cluster with proteins L14 and L19. Post-translationally, methylated by PrmB.

Its function is as follows. One of the primary rRNA binding proteins, it binds directly near the 3'-end of the 23S rRNA, where it nucleates assembly of the 50S subunit. This chain is Large ribosomal subunit protein uL3, found in Rhizobium etli (strain CIAT 652).